A 233-amino-acid polypeptide reads, in one-letter code: Inner kinetochore subunit fta4 (233 aa).

2 positions are modified to phosphothreonine: T189 and T191.

The protein belongs to the NKP1 family. Component of the inner kinetochore constitutive centromere-associated network (CCAN) (also known as central kinetochore Sim4 complex in fission yeast), which is composed of at least cnl2, cnp3, cnp20, fta1, fta2, fta3, fta4, fta6, fta7, mal2, mhf1, mhf2, mis6, mis15, mis17, sim4 and wip1.

Its subcellular location is the nucleus. It localises to the chromosome. It is found in the centromere. The protein localises to the kinetochore. Its function is as follows. Component of the kinetochore, a multiprotein complex that assembles on centromeric DNA and attaches chromosomes to spindle microtubules, mediating chromosome segregation and sister chromatid segregation during meiosis and mitosis. Component of the inner kinetochore constitutive centromere-associated network (CCAN), which serves as a structural platform for outer kinetochore assembly. Fta2, fta3 and fta4 associate with the central core (cnt) and inner repeat (inr) region of the centromere. This Schizosaccharomyces pombe (strain 972 / ATCC 24843) (Fission yeast) protein is Inner kinetochore subunit fta4 (fta4).